The following is a 283-amino-acid chain: DNA repair protein RecO (283 aa).

Belongs to the RecO family.

In terms of biological role, involved in DNA repair and RecF pathway recombination. The polypeptide is DNA repair protein RecO (Gloeothece citriformis (strain PCC 7424) (Cyanothece sp. (strain PCC 7424))).